Consider the following 94-residue polypeptide: MLKPLGDRVVLKAETEEEKTVGGIVLASNVKEKPTTGKVIAVGEGRTLENGQKLAPAVKEGDRVLFDKYAGNEVEYNGEKFLVVHAKDLVAIVE.

This sequence belongs to the GroES chaperonin family. In terms of assembly, heptamer of 7 subunits arranged in a ring. Interacts with the chaperonin GroEL.

It is found in the cytoplasm. Functionally, together with the chaperonin GroEL, plays an essential role in assisting protein folding. The GroEL-GroES system forms a nano-cage that allows encapsulation of the non-native substrate proteins and provides a physical environment optimized to promote and accelerate protein folding. GroES binds to the apical surface of the GroEL ring, thereby capping the opening of the GroEL channel. The polypeptide is Co-chaperonin GroES (Limosilactobacillus reuteri (strain DSM 20016) (Lactobacillus reuteri)).